The chain runs to 474 residues: Glutathione synthetase (474 aa).

Ala2 carries the post-translational modification N-acetylalanine. Arg125 contributes to the substrate binding site. Glu144 provides a ligand contact to ATP. Mg(2+)-binding residues include Glu144 and Asn146. Substrate is bound by residues 148–151 (ISAS), 214–216 (ERN), Gln220, and 267–270 (RDGY). Residues Lys305, 364-373 (KPQREGGGNN), Tyr375, and 398-401 (MEKI) contribute to the ATP site. Glu368 is a Mg(2+) binding site. Residue Ser415 is modified to Phosphoserine. Position 425 (Glu425) interacts with ATP. Arg450 provides a ligand contact to substrate. ATP is bound by residues Lys452 and Asp458. Substrate is bound at residue 461 to 462 (VA).

Belongs to the eukaryotic GSH synthase family. Homodimer. Mg(2+) is required as a cofactor.

It catalyses the reaction gamma-L-glutamyl-L-cysteine + glycine + ATP = glutathione + ADP + phosphate + H(+). The catalysed reaction is gamma-L-glutamyl-(2S)-2-aminobutanoate + glycine + ATP = ophthalmate + ADP + phosphate + H(+). Its pathway is sulfur metabolism; glutathione biosynthesis; glutathione from L-cysteine and L-glutamate: step 2/2. Functionally, catalyzes the production of glutathione from gamma-glutamylcysteine and glycine in an ATP-dependent manner. Glutathione (gamma-glutamylcysteinylglycine, GSH) is the most abundant intracellular thiol in living aerobic cells and is required for numerous processes including the protection of cells against oxidative damage, amino acid transport, the detoxification of foreign compounds, the maintenance of protein sulfhydryl groups in a reduced state and acts as a cofactor for a number of enzymes. Participates in ophthalmate biosynthesis in hepatocytes. The sequence is that of Glutathione synthetase from Homo sapiens (Human).